The primary structure comprises 448 residues: Adenylosuccinate synthetase (448 aa).

GTP contacts are provided by residues 36–42 (GDEGKGK) and 64–66 (GHT). The active-site Proton acceptor is Asp-37. Residues Asp-37 and Gly-64 each contribute to the Mg(2+) site. IMP is bound by residues 37-40 (DEGK), 62-65 (NAGH), Thr-154, Arg-168, Asn-246, Thr-261, and Arg-325. The active-site Proton donor is His-65. 321–327 (VTTKRKR) is a substrate binding site. GTP is bound by residues Arg-327, 353 to 355 (KLD), and 436 to 438 (GVG).

This sequence belongs to the adenylosuccinate synthetase family. In terms of assembly, homodimer. Mg(2+) is required as a cofactor.

The protein localises to the cytoplasm. It catalyses the reaction IMP + L-aspartate + GTP = N(6)-(1,2-dicarboxyethyl)-AMP + GDP + phosphate + 2 H(+). Its pathway is purine metabolism; AMP biosynthesis via de novo pathway; AMP from IMP: step 1/2. Functionally, plays an important role in the de novo pathway and in the salvage pathway of purine nucleotide biosynthesis. Catalyzes the first committed step in the biosynthesis of AMP from IMP. The sequence is that of Adenylosuccinate synthetase from Drosophila pseudoobscura pseudoobscura (Fruit fly).